The sequence spans 609 residues: Large ribosomal subunit assembly factor BipA (609 aa).

In terms of domain architecture, tr-type G spans 3-198 (QNIRNIAIIA…AIIKYAPAPN (196 aa)). GTP-binding positions include 15 to 20 (DHGKTT) and 128 to 131 (NKID).

It belongs to the TRAFAC class translation factor GTPase superfamily. Classic translation factor GTPase family. BipA subfamily. Monomer.

The protein localises to the cytoplasm. The enzyme catalyses GTP + H2O = GDP + phosphate + H(+). A 50S ribosomal subunit assembly protein with GTPase activity, required for 50S subunit assembly at low temperatures, may also play a role in translation. Binds GTP and analogs. Binds the 70S ribosome between the 30S and 50S subunits, in a similar position as ribosome-bound EF-G; it contacts a number of ribosomal proteins, both rRNAs and the A-site tRNA. The chain is Large ribosomal subunit assembly factor BipA from Buchnera aphidicola subsp. Schizaphis graminum (strain Sg).